The following is an 897-amino-acid chain: 3'-5' exonuclease DinG (897 aa).

In terms of domain architecture, Exonuclease spans 8 to 161; it reads VVDLETTGNQ…DEDAATTAKL (154 aa). One can recognise a Helicase ATP-binding domain in the interval 241–496; the sequence is SKAVDQLGLT…KAIDQLEKQR (256 aa). An ATP-binding site is contributed by 276–283; the sequence is ASLGSGKS. Positions 448–451 match the DEAH box motif; it reads DEAH. The Helicase C-terminal domain occupies 703-893; sequence NIDEYVASIV…QFGKLLRQIQ (191 aa).

This sequence belongs to the helicase family. DinG subfamily. Type 2 sub-subfamily.

Functionally, 3'-5' exonuclease. In Staphylococcus aureus (strain USA300), this protein is 3'-5' exonuclease DinG.